The following is a 129-amino-acid chain: Natriuretic peptides B (129 aa).

The N-terminal stretch at 1-26 (MDPQKALSRTLLLLLFLHLSLLGCRS) is a signal peptide. Cysteine 107 and cysteine 123 are oxidised to a cystine.

Belongs to the natriuretic peptide family. Post-translationally, the precursor molecule is proteolytically cleaved, possibly by FURIN or CORIN, to produce the active peptide. May undergo further proteolytic cleavage by various proteases such as DPP4, MME and possibly FAP, to give rise to a variety of shorter peptides. May be cleaved at Pro-99 by the prolyl endopeptidase FAP (seprase) activity (in vitro). May be degraded by IDE. During IDE degradation, the resulting products initially increase the activation of NPR1 and can also stimulate NPR2 to produce cGMP before the fragments are completely degraded and inactivated by IDE (in vitro).

The protein localises to the secreted. In terms of biological role, cardiac hormone that plays a key role in mediating cardio-renal homeostasis. May also function as a paracrine antifibrotic factor in the heart. Acts by specifically binding and stimulating NPR1 to produce cGMP, which in turn activates effector proteins that drive various biological responses. Involved in regulating the extracellular fluid volume and maintaining the fluid-electrolyte balance through natriuresis, diuresis, vasorelaxation, and inhibition of renin and aldosterone secretion. Binds the clearance receptor NPR3. This chain is Natriuretic peptides B (NPPB), found in Ovis aries (Sheep).